A 189-amino-acid polypeptide reads, in one-letter code: MVKMIVGLGNPGSKHQQTKHNVGFMAVDRLVKDLDVSFTEDKTFKALIGSTFINQEKIYFVKPTTFMNNSGLAVRALLTYYNISTKDLMVIYDDLDMAVGKIRLRQKGSAGGHNGIKSIIAHIGTQEFDRVKIGIGRPSHGMSVINHVLGKFDTDDMITINIALDKVDKAINYYLQEKSIEKTMQQFNG.

Position 15 (His15) interacts with tRNA. Residue His20 is the Proton acceptor of the active site. The tRNA site is built by Phe66, Asn68, and Asn114.

The protein belongs to the PTH family. Monomer.

The protein localises to the cytoplasm. The catalysed reaction is an N-acyl-L-alpha-aminoacyl-tRNA + H2O = an N-acyl-L-amino acid + a tRNA + H(+). In terms of biological role, hydrolyzes ribosome-free peptidyl-tRNAs (with 1 or more amino acids incorporated), which drop off the ribosome during protein synthesis, or as a result of ribosome stalling. Its function is as follows. Catalyzes the release of premature peptidyl moieties from peptidyl-tRNA molecules trapped in stalled 50S ribosomal subunits, and thus maintains levels of free tRNAs and 50S ribosomes. In Streptococcus equi subsp. equi (strain 4047), this protein is Peptidyl-tRNA hydrolase.